The following is a 594-amino-acid chain: Chitooligosaccharidolytic beta-N-acetylglucosaminidase (594 aa).

Residues 1–22 (MWSRRIPLFIFGVLVLILSVAA) form the signal peptide. Cystine bridges form between Cys31/Cys59 and Cys36/Cys55. Asn164 carries N-linked (GlcNAc...) asparagine glycosylation. Catalysis depends on charge relay system residues Asp249 and His303. Cystine bridges form between Cys316–Cys373 and Cys326–Cys331. Glu368 acts as the Charge relay system in catalysis. Asn375 carries an N-linked (GlcNAc...) asparagine glycan. 2 disulfides stabilise this stretch: Cys478-Cys491 and Cys585-Cys592.

The protein belongs to the glycosyl hydrolase 20 family. As to quaternary structure, homodimer.

It catalyses the reaction Hydrolysis of terminal non-reducing N-acetyl-D-hexosamine residues in N-acetyl-beta-D-hexosaminides.. Inhibited by O-(2-acetamido-2-deoxy-D-glucopyransylidene)-amino-N-phenylcarbamate (PUGNAc). Inhibited by thiabendazole (TMG)-chitotriomycin. Inhibited by 6-(dimethylamino)-2-(2-(((5-methyl-1,3,4-thiadiazol-2-yl)methyl)amino)ethyl)- 1H-benzo[de]isoquinoline-1,3(2H)-dione (Q2), a synthesized non-carbohydrate unsymmetrical dyad of naphthalimide and thiadiazole having a dimethylamino group at C4 of the naphthalimide. Inhibited poorly by N-acetyl-glucosamine (NAG)-thiazoline (NGT), but when the thiazoline ring of NGT is replaced by a bulky substituent such as in compound 1,2-dideoxy-2'-methylamino-alpha-D-glucopyranoso-[2,1-d]-Delta2'-thiazoline (NMAGT), the inhibition constant Ki is lowered 600-fold compared to that of NGT. Inhibited by berberine, berberine analogs thalifendine and palmatine, and berberine derivative SYSU-1, but not by berberine analog tetrahydroberberine. Functionally, hydrolyzes one beta-GlcNAc unit at a time from the non-reducing ends of substrates, with a preference for shorter substrates. The 2-acetamido group and the beta-glycoside bond linkage in the substrate are required for its activity. Active with p-nitrophenyl (pNP)-beta-GlcNAc, pNP-beta-GalNAc and chitooligosaccharides (degree of polymerization from 2 to 6), but not with the complex N-glycan substrate (GlcNAcbeta-1,2Manalpha-1,6)(GlcNAcbeta-1,2Manalpha-1,3)Manbeta-1,4GlcNAcbeta-1,4GlcNAc-PA (GnGn-PA), pNP-alpha-GlcNAc or with the long polymer colloidal chitin. Involved in chitin catabolism. Involved in the degradation of old cuticle during the pupation stage. This Ostrinia furnacalis (Asian corn borer) protein is Chitooligosaccharidolytic beta-N-acetylglucosaminidase.